We begin with the raw amino-acid sequence, 476 residues long: tRNA(Ile)-lysidine synthase (476 aa).

30 to 35 contacts ATP; it reads SGGPDS.

This sequence belongs to the tRNA(Ile)-lysidine synthase family.

Its subcellular location is the cytoplasm. It catalyses the reaction cytidine(34) in tRNA(Ile2) + L-lysine + ATP = lysidine(34) in tRNA(Ile2) + AMP + diphosphate + H(+). Functionally, ligates lysine onto the cytidine present at position 34 of the AUA codon-specific tRNA(Ile) that contains the anticodon CAU, in an ATP-dependent manner. Cytidine is converted to lysidine, thus changing the amino acid specificity of the tRNA from methionine to isoleucine. In Bacillus cereus (strain ATCC 10987 / NRS 248), this protein is tRNA(Ile)-lysidine synthase.